A 551-amino-acid polypeptide reads, in one-letter code: Synapse-associated protein of 47 kDa (551 aa).

Disordered regions lie at residues 20 to 72 (AGDE…AGKR) and 117 to 198 (AMPA…GQGK). 3 stretches are compositionally biased toward low complexity: residues 26–59 (PAPT…AAAA), 117–128 (AMPAMPSIPSIP), and 137–146 (DGAEGAEGAV). 2 positions are modified to phosphoserine: Ser-178 and Ser-182. Over residues 182 to 197 (SGGGTPTGDEGQIGQG) the composition is skewed to gly residues. Thr-186 bears the Phosphothreonine mark. A BSD domain is found at 295–347 (VDFEFSYDTAYPTAIAIMAEDKALETMRFELVPKIITEENFWRNYFYRVSLII). Residues 360-391 (VGQASSGEDANEVATKEKKSKTAEPAKGDSSV) form a disordered region. A compositionally biased stretch (basic and acidic residues) spans 373 to 386 (ATKEKKSKTAEPAK). Ser-433 is subject to Phosphoserine. Residues 487 to 551 (KDYEVVDEGG…DLIEDTDDLK (65 aa)) form a disordered region. Residues 514–523 (DDTEADEDEP) show a composition bias toward acidic residues. Polar residues predominate over residues 524–535 (TISNLRTRSTNN). Thr-530 carries the post-translational modification Phosphothreonine. Positions 536–551 (DWEEYADLIEDTDDLK) are enriched in acidic residues.

Expressed specifically in neurons and transported to synaptic terminals.

The sequence is that of Synapse-associated protein of 47 kDa (Sap47) from Drosophila melanogaster (Fruit fly).